Consider the following 305-residue polypeptide: uncharacterized protein (305 aa).

Residues 8 to 28 (IGALVTAVIAIGIVFSHMILF) form a helical membrane-spanning segment.

The protein resides in the membrane. This is an uncharacterized protein from Bacillus subtilis (strain 168).